Reading from the N-terminus, the 86-residue chain is UPF0437 protein Ava_4254 (86 aa).

This sequence belongs to the UPF0437 family.

This chain is UPF0437 protein Ava_4254, found in Trichormus variabilis (strain ATCC 29413 / PCC 7937) (Anabaena variabilis).